An 863-amino-acid polypeptide reads, in one-letter code: Chloride channel protein A (863 aa).

The Cytoplasmic portion of the chain corresponds to 1–124 (MFRNNNNDNN…TSKLNHMLKT (124 aa)). The disordered stretch occupies residues 48–78 (ENGLINNNNNSHNNNNGGNNNNHGPSKVTHR). Residues 49–71 (NGLINNNNNSHNNNNGGNNNNHG) are compositionally biased toward low complexity. The next 7 helical transmembrane spans lie at 125–145 (FGKWIICFMIGVLVGITAYLV), 171–191 (IAFLVYYSINILFGVSASLVI), 228–248 (LVSLILAYSSGLILGPEGPMI), 289–309 (GAAAGVAAAFGAPIGGVLFGF), 324–344 (TFFACLIATFTTNIILQGFDM), 367–387 (LIPFALIGVAGGLFGALFVNL), and 408–428 (VLEVFILITITSTILYCCAAF). The segment at 434–460 (KTQANGSQTNSLDTSSSSILSSSGDNS) is disordered. The segment covering 439 to 460 (GSQTNSLDTSSSSILSSSGDNS) has biased composition (low complexity). Transmembrane regions (helical) follow at residues 518–538 (IFTIPTLAVFSLISFILTTIT), 539–559 (SGLMLASGLFIPMMLVGATFG), and 561–581 (LVGQVIALFVSVDPCIYALVG). CBS domains lie at 661 to 742 (MKTE…CHEQ) and 816 to 863 (MNLS…KDLL).

Belongs to the chloride channel (TC 2.A.49) family.

Its subcellular location is the membrane. Voltage-gated chloride channel. Chloride channels may have several functions including the regulation of cell volume, membrane potential stabilization and signal transduction. In Dictyostelium discoideum (Social amoeba), this protein is Chloride channel protein A (clcA).